Consider the following 246-residue polypeptide: Receptor-transporting protein 4 (246 aa).

Topologically, residues 1–224 (MVVDFWTWEQ…EKLGPSRDPD (224 aa)) are cytoplasmic. The 3CxxC-type zinc finger occupies 48-159 (RAFGWFRCSS…DTANCEACTL (112 aa)). A helical membrane pass occupies residues 225 to 245 (PLNICVFILLLVFIVVKCFTS).

The protein belongs to the TMEM7 family. In terms of assembly, interacts with TASR16. Interacts with OPRD1 and OPRM1; the interaction promotes cell surface localization of the OPDR1-OPRM1 heterodimer. (Microbial infection) Interacts with influenza A virus protein NS1; this interaction sequesters NS1 from interacting with RIG-I/DDX58 to restore antiviral signaling. Expressed in circumvallate papillae and testis.

Its subcellular location is the membrane. It is found in the cytoplasm. Chaperone protein that facilitates the trafficking and functional cell surface expression of some G-protein coupled receptors (GPCRs). Promotes functional expression of the bitter taste receptor TAS2R16. Also promotes functional expression of the opioid receptor heterodimer OPRD1-OPRM1. In addition, acts as a potent IFN-inducible suppressor of pathogens including lyssavirus rabies, influenza A or yellow fever virus. Mechanistically, associates with the viral replicase, binds viral RNA, and thereby suppresses viral genome amplification that replicates at the endoplasmic reticulum. In addition, restores antiviral signaling by interacting with and sequestering influenza A virus protein NS1. The sequence is that of Receptor-transporting protein 4 (RTP4) from Homo sapiens (Human).